The primary structure comprises 384 residues: Na(+)/H(+) antiporter NhaA (384 aa).

The next 11 membrane-spanning stretches (helical) occupy residues 7–27 (FYNLETIGGILLFIAAVLAII), 58–78 (LLLWINDGLMAIYFLLIGLEI), 94–114 (LVPALTALAGLLFPALIFIFF), 124–144 (GWAIPTATDIAFTLGIVSLLG), 153–173 (ILLTAIAIFDDIAAIVIIALF), 179–199 (SLLSLSLALVFTLILIGLNYF), 204–224 (ISVFMLFGVALWIAVLKSGVH), 256–276 (VVFLILPLFAFANAGVSFVGL), 285–305 (VVLGIGLGLFLGKQLGIFLSL), 325–345 (VYGIALICGVGFTMSLFIGSL), and 357–377 (MVKIGVVFGSFIAGLTGFLVL).

This sequence belongs to the NhaA Na(+)/H(+) (TC 2.A.33) antiporter family.

Its subcellular location is the cell inner membrane. The enzyme catalyses Na(+)(in) + 2 H(+)(out) = Na(+)(out) + 2 H(+)(in). In terms of biological role, na(+)/H(+) antiporter that extrudes sodium in exchange for external protons. The sequence is that of Na(+)/H(+) antiporter NhaA from Legionella pneumophila (strain Corby).